A 102-amino-acid polypeptide reads, in one-letter code: Small ribosomal subunit protein bS20 (102 aa).

It belongs to the bacterial ribosomal protein bS20 family.

Binds directly to 16S ribosomal RNA. This chain is Small ribosomal subunit protein bS20, found in Gloeobacter violaceus (strain ATCC 29082 / PCC 7421).